We begin with the raw amino-acid sequence, 159 residues long: U1 small nuclear ribonucleoprotein C (159 aa).

Residues 4–36 form a Matrin-type zinc finger; it reads FYCDYCDTYLTHDSPSVRKTHCSGRKHKENVKD. Disordered regions lie at residues 63-95 and 139-159; these read PPTP…MPAP and MRPP…RPDR. The segment covering 77–95 has biased composition (pro residues); that stretch reads IPPPPSLGGPPRPGMMPAP.

Belongs to the U1 small nuclear ribonucleoprotein C family. As to quaternary structure, component of the U1 snRNP. The U1 snRNP is composed of the U1 snRNA and the 7 core Sm proteins snrpb, snrpd1, snrpd2, snrpd3, snrpe, snrpf and snrpg that assemble in a heptameric protein ring on the Sm site of the small nuclear RNA to form the core snRNP, and at least 3 U1 snRNP-specific proteins snrnp70/U1-70K, snrpa/U1-A and snrpc/U1-C. snrpc/U1-C interacts with U1 snRNA and the 5' splice-site region of the pre-mRNA.

It is found in the nucleus. Functionally, component of the spliceosomal U1 snRNP, which is essential for recognition of the pre-mRNA 5' splice-site and the subsequent assembly of the spliceosome. SNRPC/U1-C is directly involved in initial 5' splice-site recognition for both constitutive and regulated alternative splicing. The interaction with the 5' splice-site seems to precede base-pairing between the pre-mRNA and the U1 snRNA. Stimulates commitment or early (E) complex formation by stabilizing the base pairing of the 5' end of the U1 snRNA and the 5' splice-site region. In Xenopus laevis (African clawed frog), this protein is U1 small nuclear ribonucleoprotein C.